We begin with the raw amino-acid sequence, 597 residues long: Arginine--tRNA ligase (597 aa).

Residues 125-135 (PNTNKPLHLGH) carry the 'HIGH' region motif.

Belongs to the class-I aminoacyl-tRNA synthetase family. As to quaternary structure, monomer.

The protein resides in the cytoplasm. It carries out the reaction tRNA(Arg) + L-arginine + ATP = L-arginyl-tRNA(Arg) + AMP + diphosphate. The sequence is that of Arginine--tRNA ligase from Porphyromonas gingivalis (strain ATCC 33277 / DSM 20709 / CIP 103683 / JCM 12257 / NCTC 11834 / 2561).